Consider the following 165-residue polypeptide: Growth arrest and DNA damage-inducible protein GADD45 alpha (165 aa).

Phosphothreonine is present on threonine 2.

It belongs to the GADD45 family. Interacts with AURKA, PCNA, GADD45GIP1 and MAPK14.

It localises to the nucleus. In terms of biological role, might affect PCNA interaction with some CDK (cell division protein kinase) complexes; stimulates DNA excision repair in vitro and inhibits entry of cells into S phase. In T-cells, functions as a regulator of p38 MAPKs by inhibiting p88 phosphorylation and activity. In Rattus norvegicus (Rat), this protein is Growth arrest and DNA damage-inducible protein GADD45 alpha (Gadd45a).